The following is a 251-amino-acid chain: NADPH-dependent oxidoreductase (251 aa).

This sequence belongs to the flavin oxidoreductase frp family. Requires FMN as cofactor.

In terms of biological role, reduces FMN, organic nitro compounds and disulfide DTNB. Involved in maintenance of the cellular redox state and the disulfide stress response. This Staphylococcus epidermidis (strain ATCC 35984 / DSM 28319 / BCRC 17069 / CCUG 31568 / BM 3577 / RP62A) protein is NADPH-dependent oxidoreductase (nfrA).